The sequence spans 128 residues: Mini-ribonuclease 3 (128 aa).

Residue Asp17 is part of the active site.

It belongs to the MrnC RNase family. As to quaternary structure, homodimer. The cofactor is Mg(2+).

The protein localises to the cytoplasm. Functionally, involved in correct processing of both the 5' and 3' ends of 23S rRNA precursor. Processes 30S rRNA precursor transcript even in absence of ribonuclease 3 (Rnc); Rnc processes 30S rRNA into smaller rRNA precursors. The polypeptide is Mini-ribonuclease 3 (Streptococcus pneumoniae (strain ATCC BAA-255 / R6)).